Here is a 307-residue protein sequence, read N- to C-terminus: tRNA dimethylallyltransferase (307 aa).

5–12 (GPTGTGKS) provides a ligand contact to ATP. 7–12 (TGTGKS) serves as a coordination point for substrate.

Belongs to the IPP transferase family. As to quaternary structure, monomer. Mg(2+) is required as a cofactor.

The catalysed reaction is adenosine(37) in tRNA + dimethylallyl diphosphate = N(6)-dimethylallyladenosine(37) in tRNA + diphosphate. Its function is as follows. Catalyzes the transfer of a dimethylallyl group onto the adenine at position 37 in tRNAs that read codons beginning with uridine, leading to the formation of N6-(dimethylallyl)adenosine (i(6)A). This Mycobacterium avium (strain 104) protein is tRNA dimethylallyltransferase.